Reading from the N-terminus, the 1154-residue chain is Polyketide biosynthesis protein ThaF (1154 aa).

Positions 330–714 are acyl transferase; sequence MHAFLFPGQG…TNGIAPAARV (385 aa). Residues 627 to 689 are disordered; the sequence is SAVAASAPPR…PAPAPAPAPA (63 aa). Low complexity predominate over residues 641-672; the sequence is ADAQPPAASPARAATAASTMPPASASASASAP. Pro residues predominate over residues 673-689; sequence APAPAPAPAPAPAPAPA.

It in the N-terminal section; belongs to the FabD family.

Its subcellular location is the cytoplasm. The catalysed reaction is holo-[ACP] + malonyl-CoA = malonyl-[ACP] + CoA. Its pathway is antibiotic biosynthesis. Involved in production of the polyketide antibiotic thailandamide. Probably has an acyl transferase activity and could also have a flavin mononucleotide-dependent oxidoreductase activity. This is Polyketide biosynthesis protein ThaF from Burkholderia thailandensis (strain ATCC 700388 / DSM 13276 / CCUG 48851 / CIP 106301 / E264).